A 137-amino-acid polypeptide reads, in one-letter code: ATP synthase epsilon chain (137 aa).

It belongs to the ATPase epsilon chain family. F-type ATPases have 2 components, CF(1) - the catalytic core - and CF(0) - the membrane proton channel. CF(1) has five subunits: alpha(3), beta(3), gamma(1), delta(1), epsilon(1). CF(0) has three main subunits: a, b and c.

It is found in the cell membrane. In terms of biological role, produces ATP from ADP in the presence of a proton gradient across the membrane. This is ATP synthase epsilon chain from Mycoplasmopsis synoviae (strain 53) (Mycoplasma synoviae).